We begin with the raw amino-acid sequence, 426 residues long: MFIISETQRTFASFFIFGLLNNILYVIILSAAIDLVGPSTPKAIVLLADIIPSFSFKVAAPFFIHAVPYIIRLWTLVALSATGMVLISLSPTNVISWKILGITLASLSSGLGEVSFLQLTHYYEENSAIGGFSSGTGGAGLFGSFLFMVLTNVMGFPVWVVLLICAVFPSGFIITYFNLLPLPMHEYQVILQQQQEREEEQEEEEYQQQLQDEARSQNIESIREVKYSVNYISKHVQNTIHKITPLILPYMLPLTTVYISEYVINQGISPTLLFPLKEVPRWLISSYRDIYVVYGFLYQLGVFISRSSVTMGIRIKRLYLLSVLQFINVMITLYQSIYDLPFHSIWWLFLLIFYEGLLGGASYVNTFKSVSEQVSRTKREFSMGCVSISDSLGIVTAGCINWWLELKLCHLQVARGRDWCLKGGSL.

A signal peptide spans 1–32 (MFIISETQRTFASFFIFGLLNNILYVIILSAA). The next 10 membrane-spanning stretches (helical) occupy residues 44–64 (IVLL…PFFI), 67–87 (VPYI…MVLI), 99–119 (ILGI…FLQL), 129–149 (IGGF…LFMV), 154–174 (MGFP…GFII), 243–263 (ITPL…SEYV), 290–310 (IYVV…SSVT), 318–338 (LYLL…QSIY), 340–360 (LPFH…LLGG), and 384–404 (GCVS…NWWL).

Belongs to the battenin family.

The protein localises to the vacuole membrane. Involved in vacuolar transport and vacuole pH homeostasis. Also required for cytokinesis. The chain is Protein BTN1 (BTN1) from Candida albicans (strain SC5314 / ATCC MYA-2876) (Yeast).